We begin with the raw amino-acid sequence, 562 residues long: Probable Xaa-Pro aminopeptidase PEPP (562 aa).

Residues Asp-358, Asp-369, Glu-492, and Glu-532 each coordinate Mn(2+).

This sequence belongs to the peptidase M24B family. The cofactor is Mn(2+).

It catalyses the reaction Release of any N-terminal amino acid, including proline, that is linked to proline, even from a dipeptide or tripeptide.. Functionally, catalyzes the removal of a penultimate prolyl residue from the N-termini of peptides. The chain is Probable Xaa-Pro aminopeptidase PEPP (PEPP) from Leptosphaeria maculans (strain JN3 / isolate v23.1.3 / race Av1-4-5-6-7-8) (Blackleg fungus).